Here is a 448-residue protein sequence, read N- to C-terminus: Phosphoglucosamine mutase (448 aa).

Serine 101 serves as the catalytic Phosphoserine intermediate. Mg(2+)-binding residues include serine 101, aspartate 241, aspartate 243, and aspartate 245. Serine 101 is subject to Phosphoserine.

Belongs to the phosphohexose mutase family. Requires Mg(2+) as cofactor. Post-translationally, activated by phosphorylation.

The enzyme catalyses alpha-D-glucosamine 1-phosphate = D-glucosamine 6-phosphate. In terms of biological role, catalyzes the conversion of glucosamine-6-phosphate to glucosamine-1-phosphate. The chain is Phosphoglucosamine mutase from Macrococcus caseolyticus (strain JCSC5402) (Macrococcoides caseolyticum).